Consider the following 114-residue polypeptide: UPF0339 protein plu2779 (114 aa).

2 consecutive repeat copies span residues 11–59 (TKNK…NFEI) and 62–110 (NKSG…VRDL).

This sequence belongs to the UPF0339 family. Duplicated subfamily.

This is UPF0339 protein plu2779 from Photorhabdus laumondii subsp. laumondii (strain DSM 15139 / CIP 105565 / TT01) (Photorhabdus luminescens subsp. laumondii).